Consider the following 397-residue polypeptide: MATIFFAEPELVIGHGRKVLFLNPGDLQIFKEIELPPDLTTCGLKTVEPVPAPGHPASSSKQQPAALKEATGSVKVEVSIQNVTYSPDRQLLALTTAGQKAVLLYKSRPENAQLLSIRPLARASSAPKVLQRWQLPFWSLTKREIAINTSVLRWMPRHVCFLGHLSIVYDVLWSEDQQYIITCDRDDKIRVTNYPATFDIHSYCLGHKEFVSGLAMLTEQHIISASGDKTLRVWNYTCGKELLLHELPAPAVRMLVRQLEPEKTYEVAVLFYDYVDAIGVYRLEQTTTESWSITSTQLVRAEAGTWNICNFALTDDRIYVTGAENERLTLRVYDSRNGERASGLPEGWLKMVLDNLDVAAFMPEDLSVWFKKRFDNVSDYLERKKRRIEEQKQQKCG.

WD repeat units lie at residues 75–115, 163–202, 206–244, and 303–343; these read KVEV…AQLL, GHLS…DIHS, GHKE…ELLL, and AGTW…RASG.

Belongs to the WD repeat TRM82 family. As to quaternary structure, forms a heterodimer with the catalytic subunit Mettl1. Interacts with mei-P26 and weakly interacts with bgcn; required for the function or formation of the mei-P26-bgcn-bam-sxl complex. Interacts with nanos; may be involved in mei-P26-dependent derepression of the BMP signaling pathway. Interacts with Myc; the interaction may be mediated by mei-P26 and may be involved in the regulation of ribosome biogenesis. In terms of tissue distribution, in testis, it is present at high level in hub cells, a niche for germline stem cells of testis. Ubiquitously expressed in all testicular cells throughout spermatogenesis. Ubiquitously expressed in all germline and somatic cells of the ovary.

It is found in the nucleus. It localises to the cytoplasm. It functions in the pathway tRNA modification; N(7)-methylguanine-tRNA biosynthesis. Its function is as follows. Required for the Mettl1-dependent formation of N(7)-methylguanine at position 46 (m7G46) in tRNA. In the Mettl1-wuho methyltransferase complex, it is required to stabilize and induce conformational changes of the catalytic subunit. Required for binding of nanos mRNA and repression of translation by the mei-P26-bgcn-bam-sxl complex. May cooperate with mei-P26 and nanos to derepress the BMP signaling pathway. May cooperate with mei-P26 to suppress expression of a subset of microRNAs. May cooperate with mei-P26 to regulate bam expression levels in germline cells during gametogenesis. Required to promote mitosis to meiosis transition during gametogenesis. May regulate germline cell division in part by regulating ribosome biogenesis. The sequence is that of tRNA (guanine-N(7)-)-methyltransferase non-catalytic subunit wuho from Drosophila persimilis (Fruit fly).